The sequence spans 125 residues: Small ribosomal subunit protein uS12 (125 aa).

Asp-89 is modified (3-methylthioaspartic acid).

The protein belongs to the universal ribosomal protein uS12 family. As to quaternary structure, part of the 30S ribosomal subunit. Contacts proteins S8 and S17. May interact with IF1 in the 30S initiation complex.

Functionally, with S4 and S5 plays an important role in translational accuracy. Interacts with and stabilizes bases of the 16S rRNA that are involved in tRNA selection in the A site and with the mRNA backbone. Located at the interface of the 30S and 50S subunits, it traverses the body of the 30S subunit contacting proteins on the other side and probably holding the rRNA structure together. The combined cluster of proteins S8, S12 and S17 appears to hold together the shoulder and platform of the 30S subunit. The chain is Small ribosomal subunit protein uS12 from Acidovorax sp. (strain JS42).